A 591-amino-acid polypeptide reads, in one-letter code: L-fucose isomerase (591 aa).

Active-site proton acceptor residues include glutamate 337 and aspartate 361. Mn(2+) is bound by residues glutamate 337, aspartate 361, and histidine 528.

The protein belongs to the L-fucose isomerase family. In terms of assembly, homohexamer. Mn(2+) serves as cofactor.

The protein resides in the cytoplasm. The enzyme catalyses L-fucose = L-fuculose. It carries out the reaction D-arabinose = D-ribulose. The catalysed reaction is L-xylopyranose = L-xylulose. It participates in carbohydrate degradation; L-fucose degradation; L-lactaldehyde and glycerone phosphate from L-fucose: step 1/3. Inhibited by ribitol, L-arabitol and dulcitol. Isomerization of L-xylulose to L-xylose is inhibited by xylitol. Functionally, converts the aldose L-fucose into the corresponding ketose L-fuculose. Also converts D-arabinose into D-ribulose. In addition, catalyzes the isomerization of L-xylulose to L-xylose. This chain is L-fucose isomerase, found in Escherichia coli (strain K12).